A 456-amino-acid chain; its full sequence is Bifunctional protein GlmU (456 aa).

The segment at 1 to 229 is pyrophosphorylase; that stretch reads MSNSSMSVVI…LSEVEGVNNR (229 aa). Residues 11 to 14, lysine 25, glutamine 76, 81 to 82, 103 to 105, glycine 140, glutamate 154, asparagine 169, and asparagine 227 contribute to the UDP-N-acetyl-alpha-D-glucosamine site; these read LAAG, GT, and YGD. Aspartate 105 is a binding site for Mg(2+). Residue asparagine 227 participates in Mg(2+) binding. A linker region spans residues 230-250; sequence LQLAALERVYQSEQAEKLLLA. The interval 251–456 is N-acetyltransferase; it reads GVMLLDPARF…QGWQRPIKKK (206 aa). Arginine 333 and lysine 351 together coordinate UDP-N-acetyl-alpha-D-glucosamine. Residue histidine 363 is the Proton acceptor of the active site. UDP-N-acetyl-alpha-D-glucosamine-binding residues include tyrosine 366 and asparagine 377. Acetyl-CoA contacts are provided by residues alanine 380, 386 to 387, serine 405, alanine 423, and arginine 440; that span reads NY.

In the N-terminal section; belongs to the N-acetylglucosamine-1-phosphate uridyltransferase family. The protein in the C-terminal section; belongs to the transferase hexapeptide repeat family. Homotrimer. It depends on Mg(2+) as a cofactor.

It localises to the cytoplasm. The catalysed reaction is alpha-D-glucosamine 1-phosphate + acetyl-CoA = N-acetyl-alpha-D-glucosamine 1-phosphate + CoA + H(+). The enzyme catalyses N-acetyl-alpha-D-glucosamine 1-phosphate + UTP + H(+) = UDP-N-acetyl-alpha-D-glucosamine + diphosphate. It participates in nucleotide-sugar biosynthesis; UDP-N-acetyl-alpha-D-glucosamine biosynthesis; N-acetyl-alpha-D-glucosamine 1-phosphate from alpha-D-glucosamine 6-phosphate (route II): step 2/2. It functions in the pathway nucleotide-sugar biosynthesis; UDP-N-acetyl-alpha-D-glucosamine biosynthesis; UDP-N-acetyl-alpha-D-glucosamine from N-acetyl-alpha-D-glucosamine 1-phosphate: step 1/1. Its pathway is bacterial outer membrane biogenesis; LPS lipid A biosynthesis. Catalyzes the last two sequential reactions in the de novo biosynthetic pathway for UDP-N-acetylglucosamine (UDP-GlcNAc). The C-terminal domain catalyzes the transfer of acetyl group from acetyl coenzyme A to glucosamine-1-phosphate (GlcN-1-P) to produce N-acetylglucosamine-1-phosphate (GlcNAc-1-P), which is converted into UDP-GlcNAc by the transfer of uridine 5-monophosphate (from uridine 5-triphosphate), a reaction catalyzed by the N-terminal domain. This is Bifunctional protein GlmU from Yersinia enterocolitica serotype O:8 / biotype 1B (strain NCTC 13174 / 8081).